We begin with the raw amino-acid sequence, 197 residues long: MSWGRLSRLLKPALLCGALAVPGLAGTMCASRDDWRCARSMHEFAAKDIDGHMVCLDKYRGCVCIVTNVASQUGKTDVNYTQLVDLHARYAECGLRILAFPCNQFGRQEPGSNQEIKEFAAGYNVRFDMYSKICVNGDDAHPLWKWMKVQPKGRGMLGNAIKWNFTKFLIDKNGCVVKRYGPMEEPQVIEKDLPCYL.

Phosphoserine is present on Ser-40. Sec-73 is an active-site residue. Residue Sec-73 is a non-standard amino acid, selenocysteine. Residue Val-78 is modified to Phosphoserine.

Belongs to the glutathione peroxidase family. In terms of assembly, monomer. Has a tendency to form higher mass oligomers. Interacts with FUNDC1; this interaction promotes GPX4 recruitment into mitochondria through TOM/TIM complex where it is degraded by mitophagy. As to expression, present primarily in testis. Expressed in flagella of epididymal sperm. Isoform Cytoplasmic: Highly expressed in testis. Present in spermatogonia, spermatocyte and spermatid (at protein level).

It localises to the nucleus. Its subcellular location is the nucleolus. The protein resides in the mitochondrion. The protein localises to the cytoplasm. The enzyme catalyses a hydroperoxy polyunsaturated fatty acid + 2 glutathione = a hydroxy polyunsaturated fatty acid + glutathione disulfide + H2O. It carries out the reaction 2 glutathione + H2O2 = glutathione disulfide + 2 H2O. The catalysed reaction is tert-butyl hydroperoxide + 2 glutathione = tert-butanol + glutathione disulfide + H2O. It catalyses the reaction cumene hydroperoxide + 2 glutathione = 2-phenylpropan-2-ol + glutathione disulfide + H2O. The enzyme catalyses (9S)-hydroperoxy-(10E,12Z)-octadecadienoate + 2 glutathione = (9S)-hydroxy-(10E,12Z)-octadecadienoate + glutathione disulfide + H2O. It carries out the reaction (13S)-hydroperoxy-(9Z,11E)-octadecadienoate + 2 glutathione = (13S)-hydroxy-(9Z,11E)-octadecadienoate + glutathione disulfide + H2O. The catalysed reaction is (5S)-hydroperoxy-(6E,8Z,11Z,14Z)-eicosatetraenoate + 2 glutathione = (5S)-hydroxy-(6E,8Z,11Z,14Z)-eicosatetraenoate + glutathione disulfide + H2O. It catalyses the reaction (12R)-hydroperoxy-(5Z,8Z,10E,14Z)-eicosatetraenoate + 2 glutathione = (12R)-hydroxy-(5Z,8Z,10E,14Z)-eicosatetraenoate + glutathione disulfide + H2O. The enzyme catalyses (12S)-hydroperoxy-(5Z,8Z,10E,14Z)-eicosatetraenoate + 2 glutathione = (12S)-hydroxy-(5Z,8Z,10E,14Z)-eicosatetraenoate + glutathione disulfide + H2O. It carries out the reaction (15S)-hydroperoxy-(5Z,8Z,11Z,13E)-eicosatetraenoate + 2 glutathione = (15S)-hydroxy-(5Z,8Z,11Z,13E)-eicosatetraenoate + glutathione disulfide + H2O. The catalysed reaction is (5S)-hydroperoxy-(6E,8Z,11Z,14Z,17Z)-eicosapentaenoate + 2 glutathione = (5S)-hydroxy-(6E,8Z,11Z,14Z,17Z)-eicosapentaenoate + glutathione disulfide + H2O. It catalyses the reaction (12S)-hydroperoxy-(5Z,8Z,10E,14Z,17Z)-eicosapentaenoate + 2 glutathione = (12S)-hydroxy-(5Z,8Z,10E,14Z,17Z)-eicosapentaenoate + glutathione disulfide + H2O. The enzyme catalyses (15S)-hydroperoxy-(5Z,8Z,11Z,13E,17Z)-eicosapentaenoate + 2 glutathione = (15S)-hydroxy-(5Z,8Z,11Z,13E,17Z)-eicosapentaenoate + glutathione disulfide + H2O. It carries out the reaction (15S)-hydroperoxy-(11Z,13E)-eicosadienoate + 2 glutathione = (15S)-hydroxy-(11Z,13E)-eicosadienoate + glutathione disulfide + H2O. The catalysed reaction is (17S)-hydroperoxy-(4Z,7Z,10Z,13Z,15E,19Z)-docosahexaenoate + 2 glutathione = (17S)-hydroxy-(4Z,7Z,10Z,13Z,15E,19Z)-docosahexaenoate + glutathione disulfide + H2O. It catalyses the reaction a hydroperoxy-1,2-diacyl-glycero-3-phosphocholine + 2 glutathione = a hydroxy-1,2-diacyl-glycero-3-phosphocholine + glutathione disulfide + H2O. In terms of biological role, essential antioxidant peroxidase that directly reduces phospholipid hydroperoxide even if they are incorporated in membranes and lipoproteins. Can also reduce fatty acid hydroperoxide, cholesterol hydroperoxide and thymine hydroperoxide. Plays a key role in protecting cells from oxidative damage by preventing membrane lipid peroxidation. Required to prevent cells from ferroptosis, a non-apoptotic cell death resulting from an iron-dependent accumulation of lipid reactive oxygen species. The presence of selenocysteine (Sec) versus Cys at the active site is essential for life: it provides resistance to overoxidation and prevents cells against ferroptosis. The presence of Sec at the active site is also essential for the survival of a specific type of parvalbumin-positive interneurons, thereby preventing against fatal epileptic seizures. May be required to protect cells from the toxicity of ingested lipid hydroperoxides. Required for normal sperm development and male fertility. Essential for maturation and survival of photoreceptor cells. Plays a role in a primary T-cell response to viral and parasitic infection by protecting T-cells from ferroptosis and by supporting T-cell expansion. Plays a role of glutathione peroxidase in platelets in the arachidonic acid metabolism. Reduces hydroperoxy ester lipids formed by a 15-lipoxygenase that may play a role as down-regulator of the cellular 15-lipoxygenase pathway. Can also reduce small soluble hydroperoxides such as H2O2, cumene hydroperoxide and tert-butyl hydroperoxide. Its function is as follows. Specifically able to suppress the production of leukotriene and prostaglandin in response to several stimuli by reducing fatty acid hydroperoxide. Functionally, specifically required to prevent mitochondrial cell death by mediating reduction of cardiolipin hydroperoxide. Also required for normal sperm development and male fertility. Required for male fertility by stabilizing the condensed chromatin in sperm nuclei. The sequence is that of Phospholipid hydroperoxide glutathione peroxidase from Rattus norvegicus (Rat).